We begin with the raw amino-acid sequence, 338 residues long: MLSKNVHTTDVVIVGAGPVGLFAVFQAGMLEMKCHVVDALDCIGGQCVTLYPDKPIYDIPAYPVITAAELIEQLKQQSAPFDTVYHLGQQVIGCKIDNDMITITTSAEQVICAKSLIIAAGCGAFKYKRLTLDNIEAFENKTVFYSVKDKNKFINKKVVIAGGGDSAIDWTLLLSDVAEVIYLVHRRENFRCAPHSLNQIKKLAECGKVQMIVPYQLAKLTGENGLLQEVLVTNFDGGAQTLPADYLLAFFGLAADLGPIHKWGLKTDLRRIEVNSITYETTIPGIYAIGDVASYPGKLKLILTGFAEAATAMSHCYQRVFGKKMHFQYSTVKGVLRS.

Residues D38, Q46, Y51, V91, F125, D291, and T331 each contribute to the FAD site.

This sequence belongs to the ferredoxin--NADP reductase type 2 family. As to quaternary structure, homodimer. The cofactor is FAD.

It carries out the reaction 2 reduced [2Fe-2S]-[ferredoxin] + NADP(+) + H(+) = 2 oxidized [2Fe-2S]-[ferredoxin] + NADPH. This chain is Ferredoxin--NADP reductase, found in Orientia tsutsugamushi (strain Ikeda) (Rickettsia tsutsugamushi).